The sequence spans 151 residues: UPF0178 protein PFL_5989 (151 aa).

Belongs to the UPF0178 family.

The chain is UPF0178 protein PFL_5989 from Pseudomonas fluorescens (strain ATCC BAA-477 / NRRL B-23932 / Pf-5).